A 168-amino-acid polypeptide reads, in one-letter code: Lipoprotein signal peptidase (168 aa).

The next 3 membrane-spanning stretches (helical) occupy residues 6–26 (VLAALKWYGVALLVILLDQIT), 70–90 (WFLALLAAGVSVLLIFWIAKL), and 98–118 (ALALALVLGGALGNLYDRMLL). Residues D123 and D141 contribute to the active site. The helical transmembrane segment at 139–159 (IADSAICIGAALLVWDSLFGT) threads the bilayer.

It belongs to the peptidase A8 family.

The protein localises to the cell inner membrane. The enzyme catalyses Release of signal peptides from bacterial membrane prolipoproteins. Hydrolyzes -Xaa-Yaa-Zaa-|-(S,diacylglyceryl)Cys-, in which Xaa is hydrophobic (preferably Leu), and Yaa (Ala or Ser) and Zaa (Gly or Ala) have small, neutral side chains.. Its pathway is protein modification; lipoprotein biosynthesis (signal peptide cleavage). In terms of biological role, this protein specifically catalyzes the removal of signal peptides from prolipoproteins. This chain is Lipoprotein signal peptidase, found in Teredinibacter turnerae (strain ATCC 39867 / T7901).